The primary structure comprises 143 residues: Transcriptional regulator MraZ (143 aa).

SpoVT-AbrB domains are found at residues 5–47 (EYFH…PVSA) and 76–119 (ASNQ…DKEK).

This sequence belongs to the MraZ family. In terms of assembly, forms oligomers.

It is found in the cytoplasm. It localises to the nucleoid. The chain is Transcriptional regulator MraZ from Finegoldia magna (strain ATCC 29328 / DSM 20472 / WAL 2508) (Peptostreptococcus magnus).